Consider the following 239-residue polypeptide: Isopentenyl-diphosphate Delta-isomerase (239 aa).

A substrate-binding site is contributed by lysine 43. Mg(2+)-binding residues include histidine 47 and histidine 58. Residues 56–210 (LLHRAFSIFL…KVKVTPWFRL (155 aa)) enclose the Nudix hydrolase domain. Residues arginine 77 and lysine 81 each coordinate substrate. Residue cysteine 93 is part of the active site. Serine 94 is a binding site for substrate. 2 residues coordinate Mg(2+): glutamate 156 and glutamate 158. Residue glutamate 158 is part of the active site.

The protein belongs to the IPP isomerase type 1 family. Mg(2+) serves as cofactor.

It catalyses the reaction isopentenyl diphosphate = dimethylallyl diphosphate. It functions in the pathway isoprenoid biosynthesis; dimethylallyl diphosphate biosynthesis; dimethylallyl diphosphate from isopentenyl diphosphate: step 1/1. Its function is as follows. Catalyzes the 1,3-allylic rearrangement of the homoallylic substrate isopentenyl (IPP) to its highly electrophilic allylic isomer, dimethylallyl diphosphate (DMAPP). The polypeptide is Isopentenyl-diphosphate Delta-isomerase (ipi) (Dictyostelium discoideum (Social amoeba)).